A 355-amino-acid polypeptide reads, in one-letter code: Elongation factor Ts (355 aa).

The tract at residues 82-85 (TDFV) is involved in Mg(2+) ion dislocation from EF-Tu.

Belongs to the EF-Ts family.

The protein resides in the cytoplasm. Associates with the EF-Tu.GDP complex and induces the exchange of GDP to GTP. It remains bound to the aminoacyl-tRNA.EF-Tu.GTP complex up to the GTP hydrolysis stage on the ribosome. This chain is Elongation factor Ts, found in Helicobacter pylori (strain Shi470).